Here is a 192-residue protein sequence, read N- to C-terminus: uncharacterized protein (192 aa).

A Nudix hydrolase domain is found at histidine 29–serine 160. The Nudix box motif lies at glycine 67–alanine 89. Glutamate 83 and glutamate 87 together coordinate Mg(2+).

Belongs to the Nudix hydrolase family. PCD1 subfamily. The cofactor is Mn(2+). Mg(2+) is required as a cofactor.

In terms of biological role, probably mediates the hydrolysis of some nucleoside diphosphate derivatives. This is an uncharacterized protein from Escherichia coli (strain SMS-3-5 / SECEC).